The sequence spans 1377 residues: Carboxypeptidase D (1377 aa).

The N-terminal stretch at 1–37 (MASGRDERPPWRLGRLRLLPPPPLLLLLLLLRSSAQA) is a signal peptide. Over 38–1296 (AHIKKAEATT…DNRIFGLPRE (1259 aa)) the chain is Extracellular. Residues 62-379 (HYYHEAALGE…ESLITLIEKV (318 aa)) enclose the Peptidase M14 1 domain. Positions 138 and 141 each coordinate Zn(2+). The Cell attachment site signature appears at 161-163 (RGD). N-linked (GlcNAc...) asparagine glycosylation is found at N171 and N216. A disordered region spans residues 188–231 (RAREGDCGLGDSGPPGTSGRDNSRGRDLNRSFPDQFSTGEPPSL). H256 contributes to the Zn(2+) binding site. Y264 is modified (phosphotyrosine). Residue S269 is modified to Phosphoserine. E349 (proton donor/acceptor) is an active-site residue. Residues N398, N409, N428, and N521 are each glycosylated (N-linked (GlcNAc...) asparagine). The 291-residue stretch at 501–791 (HHHHFPDMEI…RSLIQFMKQV (291 aa)) folds into the Peptidase M14 2 domain. Residues H563 and E566 each contribute to the Zn(2+) site. An N-linked (GlcNAc...) asparagine glycan is attached at N625. H670 serves as a coordination point for Zn(2+). E761 (proton donor/acceptor) is an active-site residue. Residues N810, N854, N866, N878, N952, and N975 are each glycosylated (N-linked (GlcNAc...) asparagine). The disordered stretch occupies residues 874 to 898 (ADANNESKKGRGHSTSTDDTSDPTS). The Peptidase M14 3 domain maps to 929–1208 (RYHSYKDLSE…KSLLSMLVEV (280 aa)). The segment covering 1038-1047 (RERAQEKDCT) has biased composition (basic and acidic residues). A disordered region spans residues 1038-1064 (RERAQEKDCTSKTGHTNAHGKDLDTDF). N-linked (GlcNAc...) asparagine glycans are attached at residues N1067 and N1139. The chain crosses the membrane as a helical span at residues 1297-1317 (LVVTVSGATMSALILTACIIW). 3 S-palmitoyl cysteine lipidation sites follow: C1314, C1318, and C1320. At 1318–1377 (CICSIKSNRHKDGFHRLRQHHDEYEDEIRMMSTGSKKSLLSHEFQDETDTEEETLYSSKH) the chain is on the cytoplasmic side. Residues S1355 and S1358 each carry the phosphoserine modification. The segment at 1356-1377 (LLSHEFQDETDTEEETLYSSKH) is disordered. 2 positions are modified to phosphothreonine: T1365 and T1367.

Belongs to the peptidase M14 family. It depends on Zn(2+) as a cofactor.

The protein resides in the cell membrane. The enzyme catalyses Releases C-terminal Arg and Lys from polypeptides.. The polypeptide is Carboxypeptidase D (Cpd) (Mus musculus (Mouse)).